Consider the following 617-residue polypeptide: Syncytin-A (617 aa).

The first 17 residues, 1 to 17, serve as a signal peptide directing secretion; sequence MVRPWVFCLLLFPCSSA. Residues 18–544 lie on the Extracellular side of the membrane; the sequence is YSDSWMPLVN…WIQWLGLGPW (527 aa). Residue Asn27 is glycosylated (N-linked (GlcNAc...) asparagine). The CXXC motif lies at 44 to 47; the sequence is CWVC. Disulfide bonds link Cys44–Cys47, Cys44–Cys505, and Cys497–Cys504. N-linked (GlcNAc...) asparagine glycans are attached at residues Asn272 and Asn365. Residues 420–440 form a fusion peptide region; that stretch reads LLPLLAGLGIASALGLGIAGI. The CX6CC motif lies at 497–505; it reads CLFLQEECC. A helical transmembrane segment spans residues 545 to 565; sequence LPSWLTSLMAPILFILVLLVF. Topologically, residues 566 to 617 are cytoplasmic; that stretch reads RPCLLNCLTHSVSRRMSSFIHTTTEGHVDKILLLRESQYKRLPQEPPEEDAV.

Belongs to the gamma type-C retroviral envelope protein family. The mature protein consists of a trimer of SU-TM heterodimers. The SU-TM heterodimers are attached by a labile interchain disulfide bond. Synthesized as an inactive precursor that is heavily N-glycosylated and processed likely by furin in the Golgi to yield the mature SU and TM proteins. The cleavage site between SU and TM requires the minimal sequence [KR]-X-[KR]-R. Post-translationally, the CXXC motif is highly conserved across a broad range of retroviral envelope proteins. It is thought to participate in the formation of a labile disulfide bond possibly with the CX6CC motif present in the transmembrane protein. Isomerization of the intersubunit disulfide bond to an SU intrachain disulfide bond is thought to occur upon receptor recognition in order to allow membrane fusion. Highly expressed in placenta where it localizes to syncytiotrophoblasts of the labyrinthine zona. Specifically localizes to syncytiotrophoblast layer I (SynT-I). Also detected at very low levels in hippocampus, brain, testis and ovary.

The protein localises to the cell membrane. In terms of biological role, this endogenous retroviral envelope protein has retained its original fusogenic properties. Together with Synb, participates in trophoblast fusion and the formation of a syncytium during placenta morphogenesis. Syna is essential for placental development and is specifically required for formation of syncytiotrophoblast layer I (SynT-I). Promotes muscle myoblast fusion. Does not have immunosuppressive activity. In Mus musculus (Mouse), this protein is Syncytin-A.